The chain runs to 302 residues: Sulfate adenylyltransferase subunit 2 (302 aa).

The protein belongs to the PAPS reductase family. CysD subfamily. In terms of assembly, heterodimer composed of CysD, the smaller subunit, and CysN.

It carries out the reaction sulfate + ATP + H(+) = adenosine 5'-phosphosulfate + diphosphate. The protein operates within sulfur metabolism; hydrogen sulfide biosynthesis; sulfite from sulfate: step 1/3. In terms of biological role, with CysN forms the ATP sulfurylase (ATPS) that catalyzes the adenylation of sulfate producing adenosine 5'-phosphosulfate (APS) and diphosphate, the first enzymatic step in sulfur assimilation pathway. APS synthesis involves the formation of a high-energy phosphoric-sulfuric acid anhydride bond driven by GTP hydrolysis by CysN coupled to ATP hydrolysis by CysD. The chain is Sulfate adenylyltransferase subunit 2 from Salmonella paratyphi A (strain AKU_12601).